The primary structure comprises 471 residues: 3-isopropylmalate dehydratase large subunit (471 aa).

Cys-349, Cys-409, and Cys-412 together coordinate [4Fe-4S] cluster.

This sequence belongs to the aconitase/IPM isomerase family. LeuC type 1 subfamily. Heterodimer of LeuC and LeuD. Requires [4Fe-4S] cluster as cofactor.

The enzyme catalyses (2R,3S)-3-isopropylmalate = (2S)-2-isopropylmalate. Its pathway is amino-acid biosynthesis; L-leucine biosynthesis; L-leucine from 3-methyl-2-oxobutanoate: step 2/4. In terms of biological role, catalyzes the isomerization between 2-isopropylmalate and 3-isopropylmalate, via the formation of 2-isopropylmaleate. In Aliivibrio fischeri (strain MJ11) (Vibrio fischeri), this protein is 3-isopropylmalate dehydratase large subunit.